A 294-amino-acid polypeptide reads, in one-letter code: 4-hydroxybenzoate octaprenyltransferase (294 aa).

The next 8 membrane-spanning stretches (helical) occupy residues 20–42 (LLRI…ALWL), 98–118 (WEAV…VVLF), 120–140 (NTLT…YPFM), 145–165 (HLPQ…AWAA), 175–195 (WLLF…YAMV), 218–238 (AIIA…GQRA), 242–262 (SFYY…QYLA), and 274–294 (FLNN…DLAF).

It belongs to the UbiA prenyltransferase family. Mg(2+) is required as a cofactor.

Its subcellular location is the cell inner membrane. It carries out the reaction all-trans-octaprenyl diphosphate + 4-hydroxybenzoate = 4-hydroxy-3-(all-trans-octaprenyl)benzoate + diphosphate. Its pathway is cofactor biosynthesis; ubiquinone biosynthesis. Functionally, catalyzes the prenylation of para-hydroxybenzoate (PHB) with an all-trans polyprenyl group. Mediates the second step in the final reaction sequence of ubiquinone-8 (UQ-8) biosynthesis, which is the condensation of the polyisoprenoid side chain with PHB, generating the first membrane-bound Q intermediate 3-octaprenyl-4-hydroxybenzoate. In Marinobacter nauticus (strain ATCC 700491 / DSM 11845 / VT8) (Marinobacter aquaeolei), this protein is 4-hydroxybenzoate octaprenyltransferase.